A 323-amino-acid chain; its full sequence is MDRRNPFQHHHHHHQLHHHLIQQQQLPPPPLSTTATMDPGGGGGGGERIPQWSIEETKELLAIREELDQTFMETKRNKLLWEVVAAKMADKGFVRSAEQCKSKWKNLVTRYKACETTEPDAIRQQFPFYNEIQSIFEARMQRMLWSEATEPSTSSKRKHHQFSSDDEEEEVDEPNQDINEELLSLVETQKRETEVITTSTSTNPRKRAKKGKGVASGTKAETAGNTLKDILEEFMRQTVKMEKEWRDAWEMKEIEREKREKEWRRRMAELEEERAATERRWMEREEERRLREEARAQKRDSLIDALLNRLNRDHNDDHHNQGF.

The span at 1–20 shows a compositional bias: basic residues; it reads MDRRNPFQHHHHHHQLHHHL. The tract at residues 1–51 is disordered; the sequence is MDRRNPFQHHHHHHQLHHHLIQQQQLPPPPLSTTATMDPGGGGGGGERIPQ. The region spanning 52-108 is the Myb-like domain; the sequence is WSIEETKELLAIREELDQTFMETKRNKLLWEVVAAKMADKGFVRSAEQCKSKWKNLV. Disordered regions lie at residues 147 to 176, 190 to 220, and 269 to 297; these read EATEPSTSSKRKHHQFSSDDEEEEVDEPNQ, KRETEVITTSTSTNPRKRAKKGKGVASGTKA, and ELEEERAATERRWMEREEERRLREEARAQ. A compositionally biased stretch (acidic residues) spans 164–176; it reads SDDEEEEVDEPNQ.

Homodimer. Heterodimer with GT-3B. In terms of tissue distribution, predominantly expressed in roots and flower buds.

It localises to the nucleus. Functionally, probable transcription factor that binds specifically to the core DNA sequence 5'-GTTAC-3'. The chain is Trihelix transcription factor GT-3a (GT-3A) from Arabidopsis thaliana (Mouse-ear cress).